The following is a 317-amino-acid chain: 2,3-dihydroxyphenylpropionate/2,3-dihydroxicinnamic acid 1,2-dioxygenase (317 aa).

Residue histidine 115 is the Proton donor of the active site. The active-site Proton acceptor is the histidine 179.

This sequence belongs to the LigB/MhpB extradiol dioxygenase family. As to quaternary structure, homotetramer. Requires Fe(2+) as cofactor.

The enzyme catalyses 3-(2,3-dihydroxyphenyl)propanoate + O2 = (2Z,4E)-2-hydroxy-6-oxonona-2,4-dienedioate + H(+). It catalyses the reaction (2E)-3-(2,3-dihydroxyphenyl)prop-2-enoate + O2 = (2Z,4E,7E)-2-hydroxy-6-oxonona-2,4,7-trienedioate + H(+). The protein operates within aromatic compound metabolism; 3-phenylpropanoate degradation. In terms of biological role, catalyzes the non-heme iron(II)-dependent oxidative cleavage of 2,3-dihydroxyphenylpropionic acid and 2,3-dihydroxicinnamic acid into 2-hydroxy-6-ketononadienedioate and 2-hydroxy-6-ketononatrienedioate, respectively. The sequence is that of 2,3-dihydroxyphenylpropionate/2,3-dihydroxicinnamic acid 1,2-dioxygenase from Photorhabdus laumondii subsp. laumondii (strain DSM 15139 / CIP 105565 / TT01) (Photorhabdus luminescens subsp. laumondii).